A 499-amino-acid polypeptide reads, in one-letter code: Glucose-6-phosphate isomerase (499 aa).

Glutamate 352 acts as the Proton donor in catalysis. Active-site residues include histidine 383 and lysine 487.

It belongs to the GPI family.

The protein resides in the cytoplasm. It catalyses the reaction alpha-D-glucose 6-phosphate = beta-D-fructose 6-phosphate. Its pathway is carbohydrate biosynthesis; gluconeogenesis. It functions in the pathway carbohydrate degradation; glycolysis; D-glyceraldehyde 3-phosphate and glycerone phosphate from D-glucose: step 2/4. In terms of biological role, catalyzes the reversible isomerization of glucose-6-phosphate to fructose-6-phosphate. The protein is Glucose-6-phosphate isomerase of Legionella pneumophila (strain Lens).